Here is a 330-residue protein sequence, read N- to C-terminus: DNA-directed RNA polymerase subunit alpha (330 aa).

The segment at 1 to 232 is alpha N-terminal domain (alpha-NTD); sequence MAILAFQKPD…YHFMLFSDEK (232 aa). Residues 248–330 are alpha C-terminal domain (alpha-CTD); sequence EEVLHMRQLL…DISKYKLDKE (83 aa).

It belongs to the RNA polymerase alpha chain family. In terms of assembly, homodimer. The RNAP catalytic core consists of 2 alpha, 1 beta, 1 beta' and 1 omega subunit. When a sigma factor is associated with the core the holoenzyme is formed, which can initiate transcription.

The enzyme catalyses RNA(n) + a ribonucleoside 5'-triphosphate = RNA(n+1) + diphosphate. In terms of biological role, DNA-dependent RNA polymerase catalyzes the transcription of DNA into RNA using the four ribonucleoside triphosphates as substrates. This is DNA-directed RNA polymerase subunit alpha from Bacteroides fragilis (strain ATCC 25285 / DSM 2151 / CCUG 4856 / JCM 11019 / LMG 10263 / NCTC 9343 / Onslow / VPI 2553 / EN-2).